Consider the following 124-residue polypeptide: Holo-[acyl-carrier-protein] synthase (124 aa).

The Mg(2+) site is built by Asp-8 and Glu-56.

This sequence belongs to the P-Pant transferase superfamily. AcpS family. Mg(2+) serves as cofactor.

It localises to the cytoplasm. The enzyme catalyses apo-[ACP] + CoA = holo-[ACP] + adenosine 3',5'-bisphosphate + H(+). Transfers the 4'-phosphopantetheine moiety from coenzyme A to a Ser of acyl-carrier-protein. The polypeptide is Holo-[acyl-carrier-protein] synthase (Nitratidesulfovibrio vulgaris (strain DP4) (Desulfovibrio vulgaris)).